A 216-amino-acid polypeptide reads, in one-letter code: Thiosulfate dehydrogenase electron acceptor (216 aa).

A signal peptide spans 1 to 22 (MKSIHWPLAGVAALLLSMQAQA). Cytochrome c domains follow at residues 23 to 108 (ADGQ…EAMP) and 118 to 210 (SEAA…ANVG). The heme c site is built by cysteine 41, cysteine 44, histidine 45, cysteine 141, cysteine 144, and histidine 145.

Post-translationally, binds 2 heme c groups covalently per subunit.

In terms of biological role, acts as an electron acceptor for the thiosulfate dehydrogenase TsdA. The chain is Thiosulfate dehydrogenase electron acceptor (tsdB) from Stutzerimonas stutzeri (strain A1501) (Pseudomonas stutzeri).